The sequence spans 80 residues: ATP synthase subunit c (80 aa).

The next 2 helical transmembrane spans lie at 8–28 (MIYF…AIGI) and 55–75 (IVMG…LYLI).

The protein belongs to the ATPase C chain family. As to quaternary structure, F-type ATPases have 2 components, F(1) - the catalytic core - and F(0) - the membrane proton channel. F(1) has five subunits: alpha(3), beta(3), gamma(1), delta(1), epsilon(1). F(0) has three main subunits: a(1), b(2) and c(10-14). The alpha and beta chains form an alternating ring which encloses part of the gamma chain. F(1) is attached to F(0) by a central stalk formed by the gamma and epsilon chains, while a peripheral stalk is formed by the delta and b chains.

The protein localises to the cell inner membrane. In terms of biological role, f(1)F(0) ATP synthase produces ATP from ADP in the presence of a proton or sodium gradient. F-type ATPases consist of two structural domains, F(1) containing the extramembraneous catalytic core and F(0) containing the membrane proton channel, linked together by a central stalk and a peripheral stalk. During catalysis, ATP synthesis in the catalytic domain of F(1) is coupled via a rotary mechanism of the central stalk subunits to proton translocation. Functionally, key component of the F(0) channel; it plays a direct role in translocation across the membrane. A homomeric c-ring of between 10-14 subunits forms the central stalk rotor element with the F(1) delta and epsilon subunits. The polypeptide is ATP synthase subunit c (Aeromonas salmonicida (strain A449)).